The following is a 570-amino-acid chain: Sulfite reductase [NADPH] hemoprotein beta-component (570 aa).

4 residues coordinate [4Fe-4S] cluster: Cys434, Cys440, Cys479, and Cys483. Residue Cys483 participates in siroheme binding.

This sequence belongs to the nitrite and sulfite reductase 4Fe-4S domain family. In terms of assembly, alpha(8)-beta(8). The alpha component is a flavoprotein, the beta component is a hemoprotein. Siroheme serves as cofactor. It depends on [4Fe-4S] cluster as a cofactor.

It catalyses the reaction hydrogen sulfide + 3 NADP(+) + 3 H2O = sulfite + 3 NADPH + 4 H(+). It participates in sulfur metabolism; hydrogen sulfide biosynthesis; hydrogen sulfide from sulfite (NADPH route): step 1/1. Component of the sulfite reductase complex that catalyzes the 6-electron reduction of sulfite to sulfide. This is one of several activities required for the biosynthesis of L-cysteine from sulfate. The protein is Sulfite reductase [NADPH] hemoprotein beta-component of Escherichia coli O9:H4 (strain HS).